The following is a 786-amino-acid chain: Rho GTPase-activating protein 10 (786 aa).

Residues 7 to 262 (EFSDCYLDSP…IRQNPKDHKR (256 aa)) enclose the BAR domain. In terms of domain architecture, PH spans 265 to 372 (QFTAEGYLYV…WLEALGGKEA (108 aa)). In terms of domain architecture, Rho-GAP spans 389 to 574 (AQLDKMGFTI…ILIENHEKIF (186 aa)). Disordered stretches follow at residues 576-608 (TPPDTTFPEPTCLSASPPNAPPRQSKRQGQRTK) and 621-727 (EDGD…PPES). A compositionally biased stretch (basic residues) spans 599 to 608 (QSKRQGQRTK). Positions 634 to 651 (PTSSLDSLSSPSPVTTAV) are enriched in low complexity. Polar residues predominate over residues 676–688 (IPGQTRSSMVQWL). The span at 689–712 (NPQSPTTTSSNSAVTPLSPGSSPF) shows a compositional bias: low complexity. The 59-residue stretch at 728–786 (IRSRKARAVYPCEAEHSSELSFEIGAIFEDVQTSREPGWLEGTLNGKRGLIPQNYVKLL) folds into the SH3 domain.

In terms of assembly, interacts with PKN3. Interacts with caspase-activated PAK2 proteolytic fragment PAK-2p34; the interaction does not affect GRAF2/ARHGAP10 GTPase activation activity towards RHOA and CDC42. Interacts via its SH3 domain with PTK2/FAK1. Interacts with PTK2B/PYK2; the interaction negatively regulates GRAF2/ARHGAP10 GTPase-activating activity. Interacts with MICAL1 and WDR44; complex formation might transit from GRAF2/ARHGAP10-MICAL1 to GRAF2/ARHGAP10-WDR44 complexes. In terms of processing, phosphorylated. Phosphorylated in vitro by constitutive active PKN3. In terms of tissue distribution, high levels of expression in heart and skeletal muscle.

It is found in the cytoplasm. The protein localises to the perinuclear region. The protein resides in the cell membrane. It localises to the endosome membrane. GTPase-activating protein that catalyzes the conversion of active GTP-bound Rho GTPases to their inactive GDP-bound form, thus suppressing various Rho GTPase-mediated cellular processes. Also converts Cdc42 to an inactive GDP-bound state. Essential for PTKB2 regulation of cytoskeletal organization via Rho family GTPases. Inhibits PAK2 proteolytic fragment PAK-2p34 kinase activity and changes its localization from the nucleus to the perinuclear region. Stabilizes PAK-2p34 thereby increasing stimulation of cell death. Associates with MICAL1 on the endosomal membrane to promote Rab8-Rab10-dependent tubule extension. After dissociation with MICAL1, recruits WDR44 which connects the endoplasmic reticulum (ER) with the endosomal tubule, thereby participating in the export of a subset of neosynthesized proteins. In Homo sapiens (Human), this protein is Rho GTPase-activating protein 10 (ARHGAP10).